Here is an 837-residue protein sequence, read N- to C-terminus: Vacuolar membrane protease (837 aa).

The Cytoplasmic segment spans residues 1 to 36; that stretch reads MSEEEVHDTSSEASEVFTNQPNAFVRGVRSIFGYRK. A helical membrane pass occupies residues 37 to 57; sequence TSLTLFVILTIVVTAGLSFYD. Over 58–355 the chain is Vacuolar; sequence NSLELTIELP…FATPISALAR (298 aa). N-linked (GlcNAc...) asparagine glycosylation is present at N143. Zn(2+)-binding residues include H157 and D169. The active-site Proton acceptor is the E201. Residues E202, E227, and H299 each contribute to the Zn(2+) site. The helical transmembrane segment at 356–376 threads the bilayer; the sequence is VNLVLLVLFPVVSTPLLFVIV. At 377 to 384 the chain is on the cytoplasmic side; the sequence is KYKKWKLR. Residues 385–405 traverse the membrane as a helical segment; it reads VTNFLGVPLAMGLAVAVGQVG. Topologically, residues 406-415 are vacuolar; the sequence is NPMLVSSHPM. A helical membrane pass occupies residues 416-436; the sequence is MVVATTTSIVVLVYYVVLNGV. Over 437 to 446 the chain is Cytoplasmic; that stretch reads DWVNTSSDQK. The chain crosses the membrane as a helical span at residues 447–467; that stretch reads LVTMIEVSFVYWVVLVYVTWS. Topologically, residues 468–474 are vacuolar; the sequence is GGDHTGE. A helical membrane pass occupies residues 475–495; the sequence is FGVTVLFFVQASTSLLGLIGW. Residues 496 to 539 lie on the Cytoplasmic side of the membrane; the sequence is TFTRVRGGDEPLLSGEEERYGTEDERDTEKPLVEHNYDWSLQYL. A helical membrane pass occupies residues 540–560; the sequence is LIVPVSSLVVYNSGWLVLEGV. An N-linked (GlcNAc...) asparagine glycan is attached at N561. At 561-572 the chain is on the vacuolar side; that stretch reads NKTVQESLASEH. The chain crosses the membrane as a helical span at residues 573–593; that stretch reads LIYWIVVVFSQFLVLPVVPFI. Residues 594 to 598 are Cytoplasmic-facing; that stretch reads TKFNR. Residues 599–619 traverse the membrane as a helical segment; sequence YIVLGLSVVAVVGVLMSMAVH. The Vacuolar segment spans residues 620–837; the sequence is PFNQGSPMKL…LVGVVKHVDV (218 aa). A glycan (N-linked (GlcNAc...) asparagine) is linked at N689.

The protein belongs to the peptidase M28 family. It depends on Zn(2+) as a cofactor.

The protein localises to the vacuole membrane. May be involved in vacuolar sorting and osmoregulation. The polypeptide is Vacuolar membrane protease (Candida albicans (strain WO-1) (Yeast)).